Consider the following 1219-residue polypeptide: Autophagy-related protein 11 (1219 aa).

The stretch at 636 to 824 (QLRIKELENV…ESMEQQTEQS (189 aa)) forms a coiled coil. Disordered stretches follow at residues 811 to 882 (QNMK…QNMG) and 895 to 926 (TPTSEDMHSLDEQSPESQLLKSNTTELQPIKS). Positions 818 to 830 (EQQTEQSANQSID) are enriched in polar residues. Residues 831–863 (QSIEQSTEQSTEQSTEQSMEQSMEQSMEQSVEQ) show a composition bias toward low complexity. A compositionally biased stretch (basic and acidic residues) spans 864 to 877 (SMEHSMEHSMEQSE). A compositionally biased stretch (polar residues) spans 909–925 (PESQLLKSNTTELQPIK). Residues 1052–1081 (RFEDIELLAKKLAKENKAKKNLFEKYRCER) are a coiled coil.

It belongs to the ATG11 family. In terms of assembly, homodimer.

It localises to the preautophagosomal structure membrane. It is found in the vacuole membrane. Its function is as follows. Involved in cytoplasm to vacuole transport (Cvt), pexophagy, mitophagy and nucleophagy. Recruits mitochondria for their selective degradation via autophagy (mitophagy) during starvation. Works as scaffold proteins that recruit ATG proteins to the pre-autophagosome (PAS), the site of vesicle/autophagosome formation. Required for the Cvt vesicles completion. The chain is Autophagy-related protein 11 (ATG11) from Vanderwaltozyma polyspora (strain ATCC 22028 / DSM 70294 / BCRC 21397 / CBS 2163 / NBRC 10782 / NRRL Y-8283 / UCD 57-17) (Kluyveromyces polysporus).